A 284-amino-acid chain; its full sequence is Probable endonuclease 4 (284 aa).

Positions 66, 106, 142, 176, 179, 213, 226, 228, and 258 each coordinate Zn(2+).

The protein belongs to the AP endonuclease 2 family. Requires Zn(2+) as cofactor.

The enzyme catalyses Endonucleolytic cleavage to 5'-phosphooligonucleotide end-products.. Functionally, endonuclease IV plays a role in DNA repair. It cleaves phosphodiester bonds at apurinic or apyrimidinic (AP) sites, generating a 3'-hydroxyl group and a 5'-terminal sugar phosphate. In Natranaerobius thermophilus (strain ATCC BAA-1301 / DSM 18059 / JW/NM-WN-LF), this protein is Probable endonuclease 4.